Here is a 448-residue protein sequence, read N- to C-terminus: Putative flavin-containing monooxygenase FMO GS-OX-like 10 (448 aa).

An FAD-binding site is contributed by 18–23; sequence GAGAAG. Position 212-217 (212-217) interacts with NADP(+); it reads GSSVSG.

The protein belongs to the FMO family. Requires FAD as cofactor.

In terms of biological role, catalyzes the conversion of methylthioalkyl glucosinolates of any chain length into methylsulfinylalkyl glucosinolates. This Arabidopsis thaliana (Mouse-ear cress) protein is Putative flavin-containing monooxygenase FMO GS-OX-like 10.